The sequence spans 158 residues: Rhombotin-2 (158 aa).

2 consecutive LIM zinc-binding domains span residues 30–89 and 94–153; these read CGGC…RLFG and CASC…EWTK.

Interacts with BEX2 and KDM5A. Interacts via its LIM domains with ELF2 and LDB1. Also interacts with basic helix-loop-helix protein TAL1/SCL and can assemble in a complex with LMO2 and TAL1/SCL. As to expression, expressed in early mouse development in central nervous system, lung, kidney, liver and spleen but only very low levels occur in thymus.

The protein resides in the nucleus. Functionally, acts with TAL1/SCL to regulate red blood cell development. Also acts with LDB1 to maintain erythroid precursors in an immature state. This Mus musculus (Mouse) protein is Rhombotin-2 (Lmo2).